A 200-amino-acid chain; its full sequence is Recombination protein RecR (200 aa).

Residues 57 to 72 form a C4-type zinc finger; that stretch reads CSHCRTFTENERCEIC. Residues 81-176 enclose the Toprim domain; it reads GLLCVVESPA…KVSRIAHGVP (96 aa).

This sequence belongs to the RecR family.

May play a role in DNA repair. It seems to be involved in an RecBC-independent recombinational process of DNA repair. It may act with RecF and RecO. This chain is Recombination protein RecR, found in Aeromonas hydrophila subsp. hydrophila (strain ATCC 7966 / DSM 30187 / BCRC 13018 / CCUG 14551 / JCM 1027 / KCTC 2358 / NCIMB 9240 / NCTC 8049).